Reading from the N-terminus, the 105-residue chain is Small ribosomal subunit protein uS10 (105 aa).

It belongs to the universal ribosomal protein uS10 family. Part of the 30S ribosomal subunit.

In terms of biological role, involved in the binding of tRNA to the ribosomes. The chain is Small ribosomal subunit protein uS10 from Legionella pneumophila (strain Paris).